Consider the following 845-residue polypeptide: MEAVDADLELLTSLLEENEAAESNSVESHEASSELDEYDELFDGDEDGSYHESDNGTEEQTVDGVEENFDTLFGDIDDINEEETVAPDTKKQSSVCQDKSKHELEDELRKMQEQMRKLQKQLQQTALAKTSSPGNPMKSPDNKLLLSGKTFQSGPLLERSLTVPKANLQDTPKRKQNLQDKSPLQKQMTSFLSPPDKSSTRPVSSTATQPVLNPVRSPVGQQYPVEKFSGLRLRKPRVSSSEMERKMNGRKLIRLAQLQNKIVTEKLEDEDWVTFGVIVKKITPQSSNNGKTFSIWRLNDLKNLDKYVSLFLFGDVHKEHWKTDQGTVIGLLNANPMKPKEGTDEVCLSVDNPQKVLLMGDAVDLGTCKARKKNGDPCTQMVNLNDCEYCQYHVQAQYKKVSSKRADLQSSYSGHVPKKMARGGNGLRERLCQDGFHYGGVSSMAYATTLASTTAPKKTVQSTLSNMVVRGAEAIALEARQQIAAARKNMVQSDEFKELMTLPTPGALNLKKHFSGVPTQANEKGGQPFQSISASALLKQQKQQMLGARKKRAEEIQKRFLESTEKSEKSSTLVSSERSVFQSPKQGAEFPNAQKMATPKLGRGFAEGEDVLFFDISPPAAKSNTSAQATKLAAIQKLQAKGQTLTKADPNSIKRKRSSSAEELVAQRVASHAPASTKSPDENEPAMKKHREQLAYLESKEFQKILNAKSKHTGILKEAEAEIQERYFDPLVKKEQLEEKMRSIREQECRVVTCKTCKYTHFKPKETCVSENHDFHWHNGVKRFFKCACGNRTISLDRLPKKHCSTCGLFKWERDGMLKEKTGPKIAGETLLPRGEEHGKFLNSH.

The segment at 1–145 (MEAVDADLEL…PMKSPDNKLL (145 aa)) is N-terminal domain. Low complexity predominate over residues 15 to 26 (LEENEAAESNSV). Disordered stretches follow at residues 15 to 65 (LEEN…VDGV) and 78 to 218 (DINE…VRSP). Composition is skewed to acidic residues over residues 33–47 (SELD…GDED) and 55–65 (NGTEEQTVDGV). Residues 93-131 (SSVCQDKSKHELEDELRKMQEQMRKLQKQLQQTALAKTS) adopt a coiled-coil conformation. The span at 98–116 (DKSKHELEDELRKMQEQMR) shows a compositional bias: basic and acidic residues. Over residues 120 to 130 (KQLQQTALAKT) the composition is skewed to low complexity. The segment covering 179–211 (QDKSPLQKQMTSFLSPPDKSSTRPVSSTATQPV) has biased composition (polar residues). The interval 217–367 (SPVGQQYPVE…LMGDAVDLGT (151 aa)) is OB-fold domain. The segment at 368–393 (CKARKKNGDPCTQMVNLNDCEYCQYH) is zinc finger-like 1. 2 disordered regions span residues 564–586 (TEKS…SPKQ) and 643–688 (QTLT…PAMK). The segment covering 570 to 580 (SSTLVSSERSV) has biased composition (low complexity). 2 zinc finger-like regions span residues 754–773 (CKTC…SENH) and 787–807 (CACG…CSTC).

This sequence belongs to the MCM10 family. As to quaternary structure, self-associates.

It localises to the nucleus. Functionally, acts as a replication initiation factor that brings together the MCM2-7 helicase and the DNA polymerase alpha/primase complex in order to initiate DNA replication. Additionally, plays a role in preventing DNA damage during replication. The sequence is that of Protein MCM10 homolog (mcm10) from Xenopus tropicalis (Western clawed frog).